Reading from the N-terminus, the 285-residue chain is GPN-loop GTPase 3 (285 aa).

A GTP-binding site is contributed by 13–18 (GSGKST). A Gly-Pro-Asn (GPN)-loop; involved in dimer interface motif is present at residues 70 to 72 (GPN). A GTP-binding site is contributed by 172 to 175 (TKID). The interval 253 to 276 (GEDLEPKEPPLENDDDDDDDEGDE) is disordered. The segment covering 263–275 (LENDDDDDDDEGD) has biased composition (acidic residues).

Belongs to the GPN-loop GTPase family. As to quaternary structure, heterodimer with gpn1. Binds to RNA polymerase II (RNAPII).

Functionally, small GTPase required for proper localization of RNA polymerase II (RNAPII). May act at an RNAP assembly step prior to nuclear import. This Dictyostelium discoideum (Social amoeba) protein is GPN-loop GTPase 3 (gpn3).